The following is a 333-amino-acid chain: Holliday junction branch migration complex subunit RuvB (333 aa).

The tract at residues 1 to 182 (MEERLVSGEV…FGVISRLEYY (182 aa)) is large ATPase domain (RuvB-L). ATP is bound by residues L21, R22, G63, K66, T67, T68, 129-131 (EDY), R172, Y182, and R219. T67 contributes to the Mg(2+) binding site. The small ATPAse domain (RuvB-S) stretch occupies residues 183–253 (HVDQLAQIIE…LAVEALERLQ (71 aa)). Residues 256-333 (RLGLDQIDHK…THLGMEVPKR (78 aa)) are head domain (RuvB-H). Positions 311 and 316 each coordinate DNA.

This sequence belongs to the RuvB family. In terms of assembly, homohexamer. Forms an RuvA(8)-RuvB(12)-Holliday junction (HJ) complex. HJ DNA is sandwiched between 2 RuvA tetramers; dsDNA enters through RuvA and exits via RuvB. An RuvB hexamer assembles on each DNA strand where it exits the tetramer. Each RuvB hexamer is contacted by two RuvA subunits (via domain III) on 2 adjacent RuvB subunits; this complex drives branch migration. In the full resolvosome a probable DNA-RuvA(4)-RuvB(12)-RuvC(2) complex forms which resolves the HJ.

The protein localises to the cytoplasm. It carries out the reaction ATP + H2O = ADP + phosphate + H(+). The RuvA-RuvB-RuvC complex processes Holliday junction (HJ) DNA during genetic recombination and DNA repair, while the RuvA-RuvB complex plays an important role in the rescue of blocked DNA replication forks via replication fork reversal (RFR). RuvA specifically binds to HJ cruciform DNA, conferring on it an open structure. The RuvB hexamer acts as an ATP-dependent pump, pulling dsDNA into and through the RuvAB complex. RuvB forms 2 homohexamers on either side of HJ DNA bound by 1 or 2 RuvA tetramers; 4 subunits per hexamer contact DNA at a time. Coordinated motions by a converter formed by DNA-disengaged RuvB subunits stimulates ATP hydrolysis and nucleotide exchange. Immobilization of the converter enables RuvB to convert the ATP-contained energy into a lever motion, pulling 2 nucleotides of DNA out of the RuvA tetramer per ATP hydrolyzed, thus driving DNA branch migration. The RuvB motors rotate together with the DNA substrate, which together with the progressing nucleotide cycle form the mechanistic basis for DNA recombination by continuous HJ branch migration. Branch migration allows RuvC to scan DNA until it finds its consensus sequence, where it cleaves and resolves cruciform DNA. The chain is Holliday junction branch migration complex subunit RuvB from Geobacillus kaustophilus (strain HTA426).